The following is a 147-amino-acid chain: Allograft inflammatory factor 1 (147 aa).

At Ser-2 the chain carries N-acetylserine. N6-acetyllysine is present on Lys-11. The residue at position 39 (Ser-39) is a Phosphoserine. Residues 45 to 80 (SKLEAFKKKYMEFDLNEDGGIDIMSLKRMMEKLGVP) form the EF-hand 1 domain. 3 residues coordinate Ca(2+): Asp-58, Asn-60, and Asp-62. Residues 81–115 (KTHLELKKLIMEVSSGPGETFSYSDFLKMMLGKRS) enclose the EF-hand 2; degenerate domain. The interval 128–147 (AREQEKPTGLPAKKAISELP) is disordered.

Phosphorylated on serine residues.

It localises to the cytoplasm. Its subcellular location is the cytoskeleton. The protein resides in the cell projection. It is found in the ruffle membrane. The protein localises to the phagocytic cup. In terms of biological role, may play a role in macrophage activation and function. In Bos taurus (Bovine), this protein is Allograft inflammatory factor 1 (AIF1).